Consider the following 400-residue polypeptide: Argininosuccinate synthase (400 aa).

ATP is bound at residue 8–16; sequence AYSGGLDTS. Tyrosine 87 is an L-citrulline binding site. Glycine 117 contributes to the ATP binding site. L-aspartate-binding residues include threonine 119, asparagine 123, and aspartate 124. Asparagine 123 contacts L-citrulline. L-citrulline-binding residues include arginine 127, serine 175, glutamate 260, and tyrosine 272.

The protein belongs to the argininosuccinate synthase family. Type 1 subfamily. Homotetramer.

The protein resides in the cytoplasm. The catalysed reaction is L-citrulline + L-aspartate + ATP = 2-(N(omega)-L-arginino)succinate + AMP + diphosphate + H(+). It participates in amino-acid biosynthesis; L-arginine biosynthesis; L-arginine from L-ornithine and carbamoyl phosphate: step 2/3. This Mycolicibacterium vanbaalenii (strain DSM 7251 / JCM 13017 / BCRC 16820 / KCTC 9966 / NRRL B-24157 / PYR-1) (Mycobacterium vanbaalenii) protein is Argininosuccinate synthase.